The primary structure comprises 162 residues: Phenazine biosynthesis protein PhzB1 (162 aa).

It belongs to the PhzA/PhzB family. In terms of assembly, homodimer.

Its pathway is antibiotic biosynthesis; phenazine biosynthesis. Involved in the biosynthesis of the antibiotic phenazine, a nitrogen-containing heterocyclic molecule. PhzB1 (operon phzA1B1C1E1F1G1) has a role in the biosynthesis of the phenazine during planktonic growth. The protein is Phenazine biosynthesis protein PhzB1 of Pseudomonas aeruginosa (strain ATCC 15692 / DSM 22644 / CIP 104116 / JCM 14847 / LMG 12228 / 1C / PRS 101 / PAO1).